The following is a 72-amino-acid chain: Translation initiation factor IF-1 (72 aa).

Positions Met-1–Lys-72 constitute an S1-like domain.

The protein belongs to the IF-1 family. As to quaternary structure, component of the 30S ribosomal translation pre-initiation complex which assembles on the 30S ribosome in the order IF-2 and IF-3, IF-1 and N-formylmethionyl-tRNA(fMet); mRNA recruitment can occur at any time during PIC assembly.

It is found in the cytoplasm. Functionally, one of the essential components for the initiation of protein synthesis. Stabilizes the binding of IF-2 and IF-3 on the 30S subunit to which N-formylmethionyl-tRNA(fMet) subsequently binds. Helps modulate mRNA selection, yielding the 30S pre-initiation complex (PIC). Upon addition of the 50S ribosomal subunit IF-1, IF-2 and IF-3 are released leaving the mature 70S translation initiation complex. The protein is Translation initiation factor IF-1 of Bifidobacterium adolescentis (strain ATCC 15703 / DSM 20083 / NCTC 11814 / E194a).